Here is a 395-residue protein sequence, read N- to C-terminus: SWI/SNF and RSC complexes subunit ssr4 (395 aa).

Positions lysine 182–threonine 230 are disordered. Polar residues predominate over residues alanine 190 to threonine 230.

Belongs to the SSR4 family. As to quaternary structure, component of the RSC complex composed of at least arp9, arp42, rsc1, rsc4, rsc7, rsc9, rsc58, sfh1, snf21, ssr1, ssr2, ssr3 and ssr4. The complex interacts with histone and histone variant components of centromeric chromatin. Component of the SWI/SNF global transcription activator complex composed of at least arp9, arp42, snf5, snf22, snf30, sbf59, sol1, ssr1, ssr2, ssr3, ssr4 and tfg3.

It is found in the cytoplasm. Its subcellular location is the nucleus. Its function is as follows. Component of the chromatin structure remodeling complex (RSC), which is involved in transcription regulation and nucleosome positioning. Controls particularly membrane and organelle development genes. Part of the SWI/SNF complex, an ATP-dependent chromatin remodeling complex, required for the positive and negative regulation of gene expression of a large number of genes. It changes chromatin structure by altering DNA-histone contacts within a nucleosome, leading eventually to a change in nucleosome position, thus facilitating or repressing binding of gene-specific transcription factors. The protein is SWI/SNF and RSC complexes subunit ssr4 (ssr4) of Schizosaccharomyces pombe (strain 972 / ATCC 24843) (Fission yeast).